The sequence spans 138 residues: MEWNTLVLGLLVLSVVAESSGNNSSTSTSATTSKSSASVSTTKLTTVATTSATTTTTTTLSTTSTKLSSTTHDPNVMRRHANDDFYKAHCTSHMYELSLSSFAAWWTMLNALILMGAFCIVLRHCCFQNFTATTTKGY.

The N-terminal stretch at 1–21 (MEWNTLVLGLLVLSVVAESSG) is a signal peptide. Residues 22-101 (NNSSTSTSAT…SHMYELSLSS (80 aa)) lie on the Virion surface side of the membrane. The helical transmembrane segment at 102–122 (FAAWWTMLNALILMGAFCIVL) threads the bilayer. Residues 123–138 (RHCCFQNFTATTTKGY) are Intravirion-facing.

It belongs to the herpesviridae glycoprotein N family. In terms of assembly, interacts (via N-terminus) with gM (via N-terminus). The gM-gN heterodimer forms the gCII complex. In terms of processing, O-glycosylated.

It is found in the virion membrane. The protein resides in the host membrane. It localises to the host Golgi apparatus. The protein localises to the host trans-Golgi network. Envelope glycoprotein necessary for proper maturation of gM and modulation of its membrane fusion activity. Also plays a critical role in virion morphogenesis. The sequence is that of Envelope glycoprotein N from Human cytomegalovirus (strain AD169) (HHV-5).